Reading from the N-terminus, the 297-residue chain is Nucleotide-binding protein BTH_I0482 (297 aa).

8 to 15 (GISGSGKS) contacts ATP. Residue 57 to 60 (DARS) coordinates GTP.

It belongs to the RapZ-like family.

Its function is as follows. Displays ATPase and GTPase activities. The chain is Nucleotide-binding protein BTH_I0482 from Burkholderia thailandensis (strain ATCC 700388 / DSM 13276 / CCUG 48851 / CIP 106301 / E264).